The chain runs to 377 residues: Delta(12) fatty acid desaturase DES8.11 (377 aa).

The next 2 membrane-spanning stretches (helical) occupy residues 55–75 (LIVA…IPTP) and 79–99 (LAWP…WVIG). A Histidine box-1 motif is present at residues 100–104 (HECGH). A helical transmembrane segment spans residues 112 to 132 (LIDDIVGFVLHSALLTPYFSW). The Histidine box-2 signature appears at 136–140 (HRNHH). 3 helical membrane passes run 174–194 (VFTL…TNIS), 220–240 (VLLS…LVAA), and 244–264 (AWVI…FVLI). Positions 310 to 314 (HVLHH) match the Histidine box-3 motif.

Belongs to the fatty acid desaturase type 1 family.

Its subcellular location is the membrane. It participates in lipid metabolism; polyunsaturated fatty acid biosynthesis. Converts linoleic acid into a conjugated octadecatrienoic acid, probably calendic acid. This Calendula officinalis (Pot marigold) protein is Delta(12) fatty acid desaturase DES8.11.